The following is a 148-amino-acid chain: Large ribosomal subunit protein bL9 (148 aa).

Part of the 50S ribosomal subunit.

Functionally, binds to the 23S rRNA. Extends more that 50 Angstroms beyond the surface of the 70S ribosome. This Thermus thermophilus (strain ATCC 27634 / DSM 579 / HB8) protein is Large ribosomal subunit protein bL9 (rplI).